Here is a 308-residue protein sequence, read N- to C-terminus: Phenylcoumaran benzylic ether reductase PT1 (308 aa).

NADP(+)-binding positions include 11-17, R36, and K46; that span reads GATGYIG. K134 serves as the catalytic Proton acceptor. Position 138 (R138) interacts with NADP(+).

The protein belongs to the NmrA-type oxidoreductase family. Isoflavone reductase subfamily.

The catalysed reaction is (-)-dehydrodiconiferyl alcohol + NADPH + H(+) = (S)-isodihydrodehydrodiconiferyl alcohol + NADP(+). It carries out the reaction (+)-dehydrodiconiferyl alcohol + NADPH + H(+) = (R)-isodihydrodehydrodiconiferyl alcohol + NADP(+). It catalyses the reaction (2R,3S)-dihydrodehydrodiconiferyl alcohol + NADPH + H(+) = (S)-tetrahydrodehydrodiconiferyl alcohol + NADP(+). The enzyme catalyses (2S,3R)-dihydrodehydrodiconiferyl alcohol + NADPH + H(+) = (R)-tetrahydrodehydrodiconiferyl alcohol + NADP(+). Its function is as follows. Oxidoreductase involved in lignan biosynthesis. Catalyzes the NADPH-dependent reduction of phenylcoumaran benzylic ethers. Converts dehydrodiconiferyl alcohol (DDC) to isodihydrodehydrodiconiferyl alcohol (IDDDC), and dihydrodehydrodiconiferyl alcohol (DDDC) to tetrahydrodehydrodiconiferyl alcohol (TDDC). The sequence is that of Phenylcoumaran benzylic ether reductase PT1 from Pinus taeda (Loblolly pine).